Here is a 506-residue protein sequence, read N- to C-terminus: Maturase K (506 aa).

This sequence belongs to the intron maturase 2 family. MatK subfamily.

The protein resides in the plastid. Its subcellular location is the chloroplast. In terms of biological role, usually encoded in the trnK tRNA gene intron. Probably assists in splicing its own and other chloroplast group II introns. This chain is Maturase K, found in Lactuca sativa (Garden lettuce).